The sequence spans 532 residues: Light-independent protochlorophyllide reductase subunit B (532 aa).

[4Fe-4S] cluster is bound at residue Asp-36. Asp-318 acts as the Proton donor in catalysis. 453–454 (GM) is a binding site for substrate.

Belongs to the ChlB/BchB/BchZ family. As to quaternary structure, protochlorophyllide reductase is composed of three subunits; ChlL, ChlN and ChlB. Forms a heterotetramer of two ChlB and two ChlN subunits. Requires [4Fe-4S] cluster as cofactor.

The protein localises to the plastid. It localises to the chloroplast. It catalyses the reaction chlorophyllide a + oxidized 2[4Fe-4S]-[ferredoxin] + 2 ADP + 2 phosphate = protochlorophyllide a + reduced 2[4Fe-4S]-[ferredoxin] + 2 ATP + 2 H2O. Its pathway is porphyrin-containing compound metabolism; chlorophyll biosynthesis (light-independent). In terms of biological role, component of the dark-operative protochlorophyllide reductase (DPOR) that uses Mg-ATP and reduced ferredoxin to reduce ring D of protochlorophyllide (Pchlide) to form chlorophyllide a (Chlide). This reaction is light-independent. The NB-protein (ChlN-ChlB) is the catalytic component of the complex. This chain is Light-independent protochlorophyllide reductase subunit B, found in Tetradesmus obliquus (Green alga).